We begin with the raw amino-acid sequence, 101 residues long: Chaperone modulatory protein CbpM (101 aa).

This sequence belongs to the CbpM family.

Interacts with CbpA and inhibits both the DnaJ-like co-chaperone activity and the DNA binding activity of CbpA. Together with CbpA, modulates the activity of the DnaK chaperone system. Does not inhibit the co-chaperone activity of DnaJ. In Salmonella paratyphi A (strain ATCC 9150 / SARB42), this protein is Chaperone modulatory protein CbpM.